The following is a 214-amino-acid chain: Octanoyltransferase (214 aa).

One can recognise a BPL/LPL catalytic domain in the interval 28–203 (GSGAETLLLL…RFEGFLDEFM (176 aa)). Substrate is bound by residues 66–73 (RGGDVTYH), 133–135 (SIG), and 146–148 (GFA). Residue cysteine 164 is the Acyl-thioester intermediate of the active site.

Belongs to the LipB family.

It is found in the cytoplasm. It catalyses the reaction octanoyl-[ACP] + L-lysyl-[protein] = N(6)-octanoyl-L-lysyl-[protein] + holo-[ACP] + H(+). It participates in protein modification; protein lipoylation via endogenous pathway; protein N(6)-(lipoyl)lysine from octanoyl-[acyl-carrier-protein]: step 1/2. In terms of biological role, catalyzes the transfer of endogenously produced octanoic acid from octanoyl-acyl-carrier-protein onto the lipoyl domains of lipoate-dependent enzymes. Lipoyl-ACP can also act as a substrate although octanoyl-ACP is likely to be the physiological substrate. In Geotalea uraniireducens (strain Rf4) (Geobacter uraniireducens), this protein is Octanoyltransferase.